We begin with the raw amino-acid sequence, 529 residues long: Bifunctional purine biosynthesis protein PurH (529 aa).

The MGS-like domain occupies 1–148; sequence MQQRRPVRRA…KNHKDVAIVV (148 aa). Lysine 287 bears the N6-acetyllysine mark.

It belongs to the PurH family.

The enzyme catalyses (6R)-10-formyltetrahydrofolate + 5-amino-1-(5-phospho-beta-D-ribosyl)imidazole-4-carboxamide = 5-formamido-1-(5-phospho-D-ribosyl)imidazole-4-carboxamide + (6S)-5,6,7,8-tetrahydrofolate. It carries out the reaction IMP + H2O = 5-formamido-1-(5-phospho-D-ribosyl)imidazole-4-carboxamide. Its pathway is purine metabolism; IMP biosynthesis via de novo pathway; 5-formamido-1-(5-phospho-D-ribosyl)imidazole-4-carboxamide from 5-amino-1-(5-phospho-D-ribosyl)imidazole-4-carboxamide (10-formyl THF route): step 1/1. It functions in the pathway purine metabolism; IMP biosynthesis via de novo pathway; IMP from 5-formamido-1-(5-phospho-D-ribosyl)imidazole-4-carboxamide: step 1/1. This is Bifunctional purine biosynthesis protein PurH from Escherichia coli (strain SMS-3-5 / SECEC).